The chain runs to 233 residues: tRNA (guanine-N(1)-)-methyltransferase (233 aa).

Residues Gly-121 and Ile-140–Leu-145 contribute to the S-adenosyl-L-methionine site.

The protein belongs to the RNA methyltransferase TrmD family. In terms of assembly, homodimer.

The protein localises to the cytoplasm. It catalyses the reaction guanosine(37) in tRNA + S-adenosyl-L-methionine = N(1)-methylguanosine(37) in tRNA + S-adenosyl-L-homocysteine + H(+). Specifically methylates guanosine-37 in various tRNAs. This chain is tRNA (guanine-N(1)-)-methyltransferase, found in Endomicrobium trichonymphae.